The sequence spans 452 residues: SAGA complex/transcription factor TFIID complex subunit Taf6 (452 aa).

The Histone-fold domain occupies 4–68 (TVWNIESIKD…TSADISSALR (65 aa)).

The protein belongs to the TAF6 family. Component of the 1.8 MDa SAGA (Spt-Ada-Gcn5 acetyltransferase) complex, which is composed of 19 subunits tra1, spt7, taf5, ngg1/ada3, sgf73, spt20, spt8, taf12, taf6, hfi1/ada1, ubp8, gcn5, ada2, spt3, sgf29, taf10, taf9, sgf11 and sus1. The SAGA complex is composed of 4 modules, namely the HAT (histone acetyltransferase) module (gcn5, ada2, ngg1/ada3 and sgf29), the DUB (deubiquitinating) module (ubp8, sgf11, sgf73 and sus1), the core or TAF (TBP-associated factor) module (taf5, taf6, taf9, taf10 and taf12), and the Tra1 or SPT (Suppressor of Ty) module (tra1, hfi1/ada1, spt3, spt7, spt8 and spt20). The Tra1/SPT module binds activators, the core module recruits TBP (TATA-binding protein), the HAT module contains the histone H3 acetyltransferase gcn5, and the DUB module comprises the histone H2B deubiquitinase ubp8. Interacts with gcn5, taf5 and taf73. Component of the 1.2 MDa TFIID complex, which is composed of TATA-binding protein (TBP) and the 14 TBP-associated factors (TAFs). It comprises 1 copy of each taf1, taf2, taf3, taf7, taf8, taf11, taf13, 2 copies of each taf4, taf5, taf6, taf9, taf10, taf12, and 3 copies of taf14. In TFIID, taf6 heterodimerizes with taf9, forming ultimately an octamer consisting of a taf6-taf9 heterotetramer core flanked by taf4-taf12 dimers on either side, similar to the histone H2A-H2B-H3-H4 octamer.

The protein localises to the nucleus. Its function is as follows. Functions as a component of both the DNA-binding general transcription initiation factor complex TFIID and the transcription coactivator SAGA complex. Binding of TFIID to a promoter (with or without TATA element) is the initial step in pre-initiation complex (PIC) formation. TFIID plays a key role in the regulation of gene expression by RNA polymerase II through different activities such as transcription activator interaction, core promoter recognition and selectivity, TFIIA and TFIIB interaction, chromatin modification (histone acetylation by TAF1), facilitation of DNA opening and initiation of transcription. SAGA acts as a general cofactor required for essentially all RNA polymerase II transcription. At the promoters, SAGA is required for transcription pre-initiation complex (PIC) recruitment. It influences RNA polymerase II transcriptional activity through different activities such as TBP interaction (via core/TAF module) and promoter selectivity, interaction with transcription activators (via Tra1/SPT module), and chromatin modification through histone acetylation (via HAT module) and deubiquitination (via DUB module). SAGA preferentially acetylates histones H3 (to form H3K9ac, H3K14ac, H3K18ac and H3K23ac) and H2B and deubiquitinates histone H2B. SAGA interacts with DNA via upstream activating sequences (UASs). The chain is SAGA complex/transcription factor TFIID complex subunit Taf6 from Schizosaccharomyces pombe (strain 972 / ATCC 24843) (Fission yeast).